The primary structure comprises 730 residues: Denticleless protein homolog (730 aa).

M1 is modified (N-acetylmethionine). 3 WD repeats span residues 47 to 89, 96 to 135, and 138 to 178; these read GVPV…FRKK, AHWN…LIGT, and GHQC…KDGF. A DDB1-binding motif motif is present at residues 168 to 171; the sequence is WDTR. Positions 188–198 are enriched in polar residues; it reads AHNTSDKQTPS. A disordered region spans residues 188 to 210; the sequence is AHNTSDKQTPSKPKKKQNSKGLA. The residue at position 196 (T196) is a Phosphothreonine. Residues 197 to 203 carry the Nuclear localization signal motif; sequence PSKPKKK. WD repeat units lie at residues 214-253, 267-308, 313-354, and 358-398; these read DFQQ…TAYR, SSTR…TSPV, GHQN…QPPT, and GHSQ…EEKP. The DDB1-binding motif signature appears at 243 to 246; that stretch reads WDLR. The segment at 399-443 is disordered; the sequence is GGDKLSTVGWASQKKKESRPGLVTVTSSQSTPAKAPRAKCNPSNS. Phosphoserine is present on residues S410 and S426. At T464 the chain carries Phosphothreonine; by CDK1 and CDK2. Residues 465–498 form a disordered region; sequence PTFSIKTSPAKARSPINRRGSVSSVSPKPPSSFK. Phosphoserine occurs at positions 485, 490, 495, and 512. T516 carries the phosphothreonine modification. S557 bears the Phosphoserine mark. Disordered regions lie at residues 599 to 631 and 644 to 703; these read SKDS…YASE and GEGS…TITP. Residues S676 and S679 each carry the phosphoserine modification. Residues 679–689 are compositionally biased toward polar residues; sequence SPSSQTPNSRR. Phosphothreonine is present on residues T684 and T702. S717 carries the post-translational modification Phosphoserine.

The protein belongs to the WD repeat cdt2 family. Component of the DCX(DTL) E3 ubiquitin ligase complex (also called CRL4(CDT2)), at least composed of CUL4 (CUL4A or CUL4B), DDB1, DTL/CDT2 and RBX1. Interacts with CDKN1A. Interacts with DDB1. Interacts with FBXO11; SCF(FBXWO11) controls DTL stability but DCX(DTL) does not control FBXO11 stability. Interacts with CRY1. Ubiquitinated by the anaphase promoting complex/cyclosome (APC/C). Autoubiquitinated through 'Lys-48'-polyubiquitin chains in a PCNA-independent reaction, allowing proteasomal turnover. Polyubiquitinated by SCF(FBXO11) when not phosphorylated, leading to its degradation. A tight regulation of the polyubiquitination by SCF(FBXO11) is involved in the control of different processes such as TGF-beta signaling, cell cycle progression and exit. In terms of processing, phosphorylated at Thr-464 by CDK1/Cyclin-B and CDK2/Cyclin-A but not by CDK2/Cyclin-E, MAPK1 or PLK1. Phosphorylation at Thr-464 inhibits the interaction with FBXO11 and decreases upon cell cycle exit induced by TGF-beta or serum starvation. In terms of tissue distribution, expressed in placenta and testis, very low expression seen in skeletal muscle. Detected in all hematopoietic tissues examined, with highest expression in thymus and bone marrow. A low level detected in the spleen and lymph node, and barely detectable level in the peripheral leukocytes. RA treatment down-regulated the expression in NT2 cell.

The protein resides in the nucleus. Its subcellular location is the nucleus membrane. It localises to the cytoplasm. It is found in the cytoskeleton. The protein localises to the microtubule organizing center. The protein resides in the centrosome. Its subcellular location is the chromosome. It participates in protein modification; protein ubiquitination. Functionally, substrate-specific adapter of a DCX (DDB1-CUL4-X-box) E3 ubiquitin-protein ligase complex required for cell cycle control, DNA damage response and translesion DNA synthesis. The DCX(DTL) complex, also named CRL4(CDT2) complex, mediates the polyubiquitination and subsequent degradation of CDT1, CDKN1A/p21(CIP1), FBH1, KMT5A and SDE2. CDT1 degradation in response to DNA damage is necessary to ensure proper cell cycle regulation of DNA replication. CDKN1A/p21(CIP1) degradation during S phase or following UV irradiation is essential to control replication licensing. KMT5A degradation is also important for a proper regulation of mechanisms such as TGF-beta signaling, cell cycle progression, DNA repair and cell migration. Most substrates require their interaction with PCNA for their polyubiquitination: substrates interact with PCNA via their PIP-box, and those containing the 'K+4' motif in the PIP box, recruit the DCX(DTL) complex, leading to their degradation. In undamaged proliferating cells, the DCX(DTL) complex also promotes the 'Lys-164' monoubiquitination of PCNA, thereby being involved in PCNA-dependent translesion DNA synthesis. The DDB1-CUL4A-DTL E3 ligase complex regulates the circadian clock function by mediating the ubiquitination and degradation of CRY1. This is Denticleless protein homolog (DTL) from Homo sapiens (Human).